The sequence spans 513 residues: ATP synthase subunit alpha (513 aa).

169–176 (GDRQTGKT) is a binding site for ATP.

Belongs to the ATPase alpha/beta chains family. In terms of assembly, F-type ATPases have 2 components, CF(1) - the catalytic core - and CF(0) - the membrane proton channel. CF(1) has five subunits: alpha(3), beta(3), gamma(1), delta(1), epsilon(1). CF(0) has three main subunits: a(1), b(2) and c(9-12). The alpha and beta chains form an alternating ring which encloses part of the gamma chain. CF(1) is attached to CF(0) by a central stalk formed by the gamma and epsilon chains, while a peripheral stalk is formed by the delta and b chains.

It is found in the cell inner membrane. It catalyses the reaction ATP + H2O + 4 H(+)(in) = ADP + phosphate + 5 H(+)(out). Its function is as follows. Produces ATP from ADP in the presence of a proton gradient across the membrane. The alpha chain is a regulatory subunit. This chain is ATP synthase subunit alpha, found in Salmonella paratyphi C (strain RKS4594).